Reading from the N-terminus, the 414-residue chain is Multifunctional CCA protein (414 aa).

ATP-binding residues include Gly8 and Arg11. Gly8 and Arg11 together coordinate CTP. Residues Glu21 and Asp23 each coordinate Mg(2+). Positions 91, 137, and 140 each coordinate ATP. Positions 91, 137, and 140 each coordinate CTP. The region spanning 228 to 329 (TGIHTLMTLA…LKLFDAIDVW (102 aa)) is the HD domain.

This sequence belongs to the tRNA nucleotidyltransferase/poly(A) polymerase family. Bacterial CCA-adding enzyme type 1 subfamily. In terms of assembly, monomer. Can also form homodimers and oligomers. Mg(2+) is required as a cofactor. Ni(2+) serves as cofactor.

It catalyses the reaction a tRNA precursor + 2 CTP + ATP = a tRNA with a 3' CCA end + 3 diphosphate. The enzyme catalyses a tRNA with a 3' CCA end + 2 CTP + ATP = a tRNA with a 3' CCACCA end + 3 diphosphate. Its function is as follows. Catalyzes the addition and repair of the essential 3'-terminal CCA sequence in tRNAs without using a nucleic acid template. Adds these three nucleotides in the order of C, C, and A to the tRNA nucleotide-73, using CTP and ATP as substrates and producing inorganic pyrophosphate. tRNA 3'-terminal CCA addition is required both for tRNA processing and repair. Also involved in tRNA surveillance by mediating tandem CCA addition to generate a CCACCA at the 3' terminus of unstable tRNAs. While stable tRNAs receive only 3'-terminal CCA, unstable tRNAs are marked with CCACCA and rapidly degraded. This is Multifunctional CCA protein from Yersinia enterocolitica serotype O:8 / biotype 1B (strain NCTC 13174 / 8081).